A 340-amino-acid polypeptide reads, in one-letter code: MITSFPVRNFLPRVTITSCAFFSKESTSAAGTVAEKKESELQKFAGKSNLLEKKKVGIFGTSTVPINTNFPNPKGVVDYDPDFSIKELVAELPNTRKTQGAKLSEEIKNAFNSVSIEKTELLEDIGFVRHNEARVDYRFDTQEKLDLWKIGCDSDWKEGFSTCSLVNSDRGTAVFSGNISTKVLKDGRVERAGWASMKLEDRKAFNRKKFLSKWRNFSHLLLKVRGDGRSYKIMLHSPLSMDFTWGDSFSHPLHTHGGPYWQYEKIPFSKFFHTVAGRIQDRQYRVNLEDTSSIGIVLMDRIDGDFRLEIDYIGVYNDTTHVEDFAYETYTLPVFNTHGF.

This sequence belongs to the CIA30 family.

Its subcellular location is the mitochondrion. In terms of biological role, chaperone protein involved in the assembly of the mitochondrial NADH:ubiquinone oxidoreductase complex (complex I). Required for normal growth and reproduction. The chain is Probable complex I intermediate-associated protein 30, mitochondrial (nuaf-1) from Caenorhabditis elegans.